We begin with the raw amino-acid sequence, 144 residues long: Large ribosomal subunit protein uL16 (144 aa).

This sequence belongs to the universal ribosomal protein uL16 family. As to quaternary structure, part of the 50S ribosomal subunit.

In terms of biological role, binds 23S rRNA and is also seen to make contacts with the A and possibly P site tRNAs. The protein is Large ribosomal subunit protein uL16 of Bacillus anthracis (strain A0248).